The chain runs to 171 residues: 3-hydroxydecanoyl-[acyl-carrier-protein] dehydratase (171 aa).

Residue H70 is part of the active site.

This sequence belongs to the thioester dehydratase family. FabA subfamily. As to quaternary structure, homodimer.

The protein resides in the cytoplasm. The catalysed reaction is a (3R)-hydroxyacyl-[ACP] = a (2E)-enoyl-[ACP] + H2O. It carries out the reaction (3R)-hydroxydecanoyl-[ACP] = (2E)-decenoyl-[ACP] + H2O. The enzyme catalyses (2E)-decenoyl-[ACP] = (3Z)-decenoyl-[ACP]. Its pathway is lipid metabolism; fatty acid biosynthesis. Necessary for the introduction of cis unsaturation into fatty acids. Catalyzes the dehydration of (3R)-3-hydroxydecanoyl-ACP to E-(2)-decenoyl-ACP and then its isomerization to Z-(3)-decenoyl-ACP. Can catalyze the dehydratase reaction for beta-hydroxyacyl-ACPs with saturated chain lengths up to 16:0, being most active on intermediate chain length. This chain is 3-hydroxydecanoyl-[acyl-carrier-protein] dehydratase, found in Histophilus somni (strain 129Pt) (Haemophilus somnus).